A 395-amino-acid polypeptide reads, in one-letter code: Tyrosine--tRNA ligase (395 aa).

A 'HIGH' region motif is present at residues 42-51 (PTAPDIHLGH). A 'KMSKS' region motif is present at residues 226–230 (KMSKS). Lys229 is an ATP binding site. One can recognise an S4 RNA-binding domain in the interval 334–394 (IGLANLLKEA…GKRKFARVTV (61 aa)).

Belongs to the class-I aminoacyl-tRNA synthetase family. TyrS type 2 subfamily. As to quaternary structure, homodimer.

The protein resides in the cytoplasm. The catalysed reaction is tRNA(Tyr) + L-tyrosine + ATP = L-tyrosyl-tRNA(Tyr) + AMP + diphosphate + H(+). Catalyzes the attachment of tyrosine to tRNA(Tyr) in a two-step reaction: tyrosine is first activated by ATP to form Tyr-AMP and then transferred to the acceptor end of tRNA(Tyr). The protein is Tyrosine--tRNA ligase of Mannheimia succiniciproducens (strain KCTC 0769BP / MBEL55E).